A 377-amino-acid chain; its full sequence is MKFPGPLENQRLSFLLEKAITREAQMWKVNVRKMPSNQNVSPSQRDEVIQWLAKLKYQFNLYPETFALASSLLDRFLATVKAHPKYLSCIAISCFFLAAKTVEEDERIPVLKVLARDSFCGCSSSEILRMERIILDKLNWDLHTATPLDFLHIFHAIAVSTRPQLLFSLPKLSPSQHLAVLTKQLLHCMACNQLLQFRGSMLALAMVSLEMEKLIPDWLSLTIELLQKAQMDSSQLIHCRELVAHHLSTLQSSLPLNSVYVYRPLKHTLVTCDKGVFRLHPSSVPGPDFSKDNSKPEVPVRGTAAFYHHLPAASGCKQTSTKRKVEEMEVDDFYDGIKRLYNEDNVSENVGSVCGTDLSRQEGHASPCPPLQPVSVM.

The disordered stretch occupies residues 357–377 (DLSRQEGHASPCPPLQPVSVM). Residues 367–377 (PCPPLQPVSVM) show a composition bias toward pro residues.

Belongs to the cyclin family. Highest levels in adult heart, brain and skeletal muscle. Lower levels in adult placenta, lung, kidney and pancreas. Also high levels in fetal brain and lower levels in fetal lung, liver and kidney. Also abundant in testis and thyroid.

The protein localises to the nucleus membrane. The protein is Cyclin-I of Homo sapiens (Human).